A 465-amino-acid chain; its full sequence is MNSPASVAPILPDTIFRAYDIRGVVEDTLNAETAYWIGRAIGSESLAQNEPNVSVGRDGRLSGPELVQQLIQGLHDSGCHVSDVGLVPTPALYYAANVLAGKTGVMLTGSHNPKDYNGFKIVIAGDTLANEQIQALHERIKTNNLTSQKGSITQVNILDRYFKQIKDDIVMARKLKVVVDCGNGAAGVIAPQLIEALGCEVISLFAEVDGNFPNHHPDPGKLENLQDLIAKVKETGADLGLAFDGDGDRVGVVTNAGNVVYPDRLLMLFALDVLKRNPGADIIFDVKCTRRLTPLISEHGGRPVMWKTGHSLIKKEMKKSGALLAGEMSGHIFFKERWFGFDDGIYSAARLLEILSQEPANAEDLFETFPNDISTPEINIKVTDVTKFSIIEALEKDAQWGDAKLTTIDGVRVDYPKGWGLVRASNTTPVLVLRFEAETQAELERIQGVFHAELKKVAPDLDLPF.

The active-site Phosphoserine intermediate is the serine 110. Residues serine 110, aspartate 244, aspartate 246, and aspartate 248 each contribute to the Mg(2+) site. 3 residues coordinate substrate: glutamate 327, serine 329, and histidine 331.

Belongs to the phosphohexose mutase family. Monomer. The cofactor is Mg(2+).

It catalyses the reaction alpha-D-mannose 1-phosphate = D-mannose 6-phosphate. The catalysed reaction is alpha-D-glucose 1-phosphate = alpha-D-glucose 6-phosphate. Its pathway is nucleotide-sugar biosynthesis; GDP-alpha-D-mannose biosynthesis; alpha-D-mannose 1-phosphate from D-fructose 6-phosphate: step 2/2. The protein operates within bacterial outer membrane biogenesis; lipopolysaccharide biosynthesis. The phosphomannomutase activity produces a precursor for alginate polymerization. The alginate layer causes a mucoid phenotype and provides a protective barrier against host immune defenses and antibiotics. Also involved in core-LPS biosynthesis due to its phosphoglucomutase activity. Essential for biofilm production. In Pseudomonas syringae pv. tomato (strain ATCC BAA-871 / DC3000), this protein is Phosphomannomutase/phosphoglucomutase (algC).